The chain runs to 98 residues: Defensin-B (98 aa).

The first 20 residues, 1–20 (MKSITVICFLALCTVAITSA), serve as a signal peptide directing secretion. The propeptide occupies 21–58 (YPQEPVLADEARPFANSLFDELPEETYQAAVENFRLKR). 3 disulfides stabilise this stretch: Cys-61-Cys-88, Cys-74-Cys-94, and Cys-78-Cys-96.

It belongs to the invertebrate defensin family. Type 1 subfamily.

Its subcellular location is the secreted. Antibacterial peptide mostly active against Gram-positive bacteria. The sequence is that of Defensin-B (DEFB) from Aedes aegypti (Yellowfever mosquito).